The chain runs to 374 residues: Pectate lyase 1 (374 aa).

Residues 1–22 form the signal peptide; that stretch reads MKYLLPSAAAGLLLLAAQPTMA. A disulfide bridge links Cys93 with Cys176. 4 residues coordinate Ca(2+): Asp150, Asp152, Glu187, and Asp191. Arg239 is a catalytic residue. The cysteines at positions 350 and 373 are disulfide-linked.

It belongs to the polysaccharide lyase 1 family. PLADES subfamily. Ca(2+) serves as cofactor.

The protein localises to the secreted. It catalyses the reaction Eliminative cleavage of (1-&gt;4)-alpha-D-galacturonan to give oligosaccharides with 4-deoxy-alpha-D-galact-4-enuronosyl groups at their non-reducing ends.. It functions in the pathway glycan metabolism; pectin degradation; 2-dehydro-3-deoxy-D-gluconate from pectin: step 2/5. In terms of biological role, involved in maceration and soft-rotting of plant tissue. This Pectobacterium carotovorum (Erwinia carotovora) protein is Pectate lyase 1 (pel1).